Consider the following 224-residue polypeptide: Flagellar L-ring protein (224 aa).

Residues 1–15 (MARYLVLAVALLLAA) form the signal peptide. Cys16 carries N-palmitoyl cysteine lipidation. A lipid anchor (S-diacylglycerol cysteine) is attached at Cys16.

Belongs to the FlgH family. In terms of assembly, the basal body constitutes a major portion of the flagellar organelle and consists of four rings (L,P,S, and M) mounted on a central rod.

It is found in the cell outer membrane. It localises to the bacterial flagellum basal body. Its function is as follows. Assembles around the rod to form the L-ring and probably protects the motor/basal body from shearing forces during rotation. This is Flagellar L-ring protein from Shewanella baltica (strain OS223).